Here is a 93-residue protein sequence, read N- to C-terminus: MDAIYFFLTIALAVGLTMLFTWFKKNNITLKWNEWVLGILGLLLALFAIQHTYASATYEFEYTSAWIVGVIVLLLAVVPLLFAARSVRRRVDK.

3 helical membrane-spanning segments follow: residues alanine 3–phenylalanine 23, tryptophan 35–serine 55, and serine 64–alanine 84.

This sequence belongs to the PceB family.

The protein resides in the cell membrane. May act as a membrane anchor for the chloroethene reductive dehalogenase VcrA. The polypeptide is Probable chloroethene reductive dehalogenase membrane anchor protein (Dehalococcoides mccartyi (strain VS)).